The primary structure comprises 2025 residues: E3 ubiquitin-protein ligase TTC3 (2025 aa).

The tract at residues 1 to 230 is interaction with POLG; the sequence is MDNFAEGDFT…TQSCMDCIEE (230 aa). 2 TPR repeats span residues 231–264 and 266–298; these read GELMKMKGNEEFSKERFDIAIIYYTRAIEYRPEN and LLYGNRALCFLRTGQFRNALGDGKRATILKNTW. Ser378 is modified (phosphoserine; by PKB/AKT2). The segment at 423–458 is disordered; sequence DCHPEFSPPSSQPPKHKGKQKSRNNESEKFSSSSPL. TPR repeat units follow at residues 536 to 572 and 576 to 609; these read VLVVYGLAISLLGIGQPEELSEAENQFKRIIEHYPSE and CLAYCGIGKVYLKKNRFLEALNHFEKARTLIYRL. The disordered stretch occupies residues 786 to 805; the sequence is ERMEEDLRESNPPKNEEQKE. Residues 793–805 show a composition bias toward basic and acidic residues; it reads RESNPPKNEEQKE. Residue Ser1009 is modified to Phosphoserine. Disordered regions lie at residues 1012–1068, 1215–1295, 1773–1842, and 1894–1944; these read APFS…GPFA, KPDV…SCNS, DPSV…SPKK, and ILDE…QKAE. Over residues 1019 to 1029 the composition is skewed to basic residues; that stretch reads VKNKSKKKKPK. The span at 1038-1052 shows a compositional bias: polar residues; the sequence is SGTTSVTSNNEIITS. Residue Ser1061 is modified to Phosphoserine. A compositionally biased stretch (basic and acidic residues) spans 1894–1912; the sequence is ILDEQKKKKPNPGKDKRTY. Positions 1913 to 1928 are enriched in polar residues; the sequence is EPSSATPVTRSSQGSP. The segment at 1957–1997 adopts an RING-type zinc-finger fold; the sequence is CEICHEVFKSKNVRVLKCGHKYHKGCFKQWLKGQSACPACQ. A disordered region spans residues 2004-2025; it reads EESPSGRGWPSQNQELPSCSSR. The span at 2013–2025 shows a compositional bias: polar residues; that stretch reads PSQNQELPSCSSR.

As to quaternary structure, interacts (when phosphorylated on Ser-378) with AKT1, AKT2 and AKT3 (when phosphorylated). Interacts with CIT. Interacts with POLG. Interacts with HSP70. Interacts with SMURF2. Phosphorylation on Ser-378 by Akt is required for ubiquitin ligase activity. Post-translationally, proteolytically cleaved into differently sized N- and C-terminal fragments. In terms of tissue distribution, found in all tissues examined.

It is found in the nucleus. Its subcellular location is the cytoplasm. The protein resides in the golgi apparatus. It carries out the reaction S-ubiquitinyl-[E2 ubiquitin-conjugating enzyme]-L-cysteine + [acceptor protein]-L-lysine = [E2 ubiquitin-conjugating enzyme]-L-cysteine + N(6)-ubiquitinyl-[acceptor protein]-L-lysine.. Its pathway is protein modification; protein ubiquitination. In terms of biological role, E3 ubiquitin-protein ligase which catalyzes the formation of 'Lys-48'-polyubiquitin chains. Mediates the ubiquitination and subsequent degradation of phosphorylated Akt (AKT1, AKT2 and AKT3) in the nucleus. Acts as a terminal regulator of Akt signaling after activation; its phosphorylation by Akt, which is a prerequisite for ubiquitin ligase activity, suggests the existence of a regulation mechanism required to control Akt levels after activation. Positively regulates TGFB1-induced epithelial-mesenchymal transition and myofibroblast differentiation by mediating the ubiquitination and subsequent degradation of SMURF2. Regulates neuronal differentiation by regulating actin remodeling and Golgi organization via a signaling cascade involving RHOA, CIT and ROCK. Inhibits cell proliferation. The protein is E3 ubiquitin-protein ligase TTC3 (TTC3) of Homo sapiens (Human).